A 93-amino-acid chain; its full sequence is Acylphosphatase (93 aa).

The Acylphosphatase-like domain maps to 3-93 (KQQYFISGKV…FQFNNFKIYY (91 aa)). Catalysis depends on residues Arg18 and Asn36.

The protein belongs to the acylphosphatase family.

The enzyme catalyses an acyl phosphate + H2O = a carboxylate + phosphate + H(+). The polypeptide is Acylphosphatase (acyP) (Borrelia garinii subsp. bavariensis (strain ATCC BAA-2496 / DSM 23469 / PBi) (Borreliella bavariensis)).